A 302-amino-acid polypeptide reads, in one-letter code: N-acetyl-D-glucosamine kinase (302 aa).

Residues 4–11 (GFDVGGTK) and 133–140 (GFGGGLVF) contribute to the ATP site. Zn(2+) contacts are provided by His157, Cys177, Cys179, and Cys184.

It belongs to the ROK (NagC/XylR) family. NagK subfamily.

It catalyses the reaction N-acetyl-D-glucosamine + ATP = N-acetyl-D-glucosamine 6-phosphate + ADP + H(+). It participates in cell wall biogenesis; peptidoglycan recycling. Its function is as follows. Catalyzes the phosphorylation of N-acetyl-D-glucosamine (GlcNAc) derived from cell-wall degradation, yielding GlcNAc-6-P. This is N-acetyl-D-glucosamine kinase from Aliivibrio salmonicida (strain LFI1238) (Vibrio salmonicida (strain LFI1238)).